The sequence spans 884 residues: Alanine--tRNA ligase (884 aa).

Zn(2+) is bound by residues His562, His566, Cys674, and His678.

Belongs to the class-II aminoacyl-tRNA synthetase family. The cofactor is Zn(2+).

It localises to the cytoplasm. It catalyses the reaction tRNA(Ala) + L-alanine + ATP = L-alanyl-tRNA(Ala) + AMP + diphosphate. Its function is as follows. Catalyzes the attachment of alanine to tRNA(Ala) in a two-step reaction: alanine is first activated by ATP to form Ala-AMP and then transferred to the acceptor end of tRNA(Ala). Also edits incorrectly charged Ser-tRNA(Ala) and Gly-tRNA(Ala) via its editing domain. This is Alanine--tRNA ligase from Rhizobium johnstonii (strain DSM 114642 / LMG 32736 / 3841) (Rhizobium leguminosarum bv. viciae).